Reading from the N-terminus, the 430-residue chain is Asparagine--tRNA ligase (430 aa).

It belongs to the class-II aminoacyl-tRNA synthetase family. In terms of assembly, homodimer.

It localises to the cytoplasm. The enzyme catalyses tRNA(Asn) + L-asparagine + ATP = L-asparaginyl-tRNA(Asn) + AMP + diphosphate + H(+). This Listeria monocytogenes serovar 1/2a (strain ATCC BAA-679 / EGD-e) protein is Asparagine--tRNA ligase.